Consider the following 418-residue polypeptide: NADH-quinone oxidoreductase subunit D (418 aa).

Belongs to the complex I 49 kDa subunit family. As to quaternary structure, NDH-1 is composed of 14 different subunits. Subunits NuoB, C, D, E, F, and G constitute the peripheral sector of the complex.

Its subcellular location is the cell inner membrane. The catalysed reaction is a quinone + NADH + 5 H(+)(in) = a quinol + NAD(+) + 4 H(+)(out). In terms of biological role, NDH-1 shuttles electrons from NADH, via FMN and iron-sulfur (Fe-S) centers, to quinones in the respiratory chain. The immediate electron acceptor for the enzyme in this species is believed to be ubiquinone. Couples the redox reaction to proton translocation (for every two electrons transferred, four hydrogen ions are translocated across the cytoplasmic membrane), and thus conserves the redox energy in a proton gradient. The chain is NADH-quinone oxidoreductase subunit D from Methylacidiphilum infernorum (isolate V4) (Methylokorus infernorum (strain V4)).